The following is a 391-amino-acid chain: Elongation factor Tu (391 aa).

The region spanning 10–201 is the tr-type G domain; the sequence is KPHVNIGTIG…AVDAYIPTPE (192 aa). The segment at 19 to 26 is G1; it reads GHVDHGKT. 19–26 contributes to the GTP binding site; the sequence is GHVDHGKT. Mg(2+) is bound at residue threonine 26. Residues 55 to 59 form a G2 region; it reads GITIS. A G3 region spans residues 76 to 79; it reads DCPG. Residues 76-80 and 131-134 each bind GTP; these read DCPGH and NKVD. A G4 region spans residues 131–134; it reads NKVD. The segment at 169-171 is G5; that stretch reads SAL.

It belongs to the TRAFAC class translation factor GTPase superfamily. Classic translation factor GTPase family. EF-Tu/EF-1A subfamily. In terms of assembly, monomer.

It is found in the cytoplasm. It catalyses the reaction GTP + H2O = GDP + phosphate + H(+). In terms of biological role, GTP hydrolase that promotes the GTP-dependent binding of aminoacyl-tRNA to the A-site of ribosomes during protein biosynthesis. The protein is Elongation factor Tu of Rhizobium meliloti (strain 1021) (Ensifer meliloti).